A 325-amino-acid chain; its full sequence is Protease HtpX homolog (325 aa).

The chain crosses the membrane as a helical span at residues 20-40; sequence IGYLLGGGGGMMIALVIAVAM. Histidine 130 contributes to the Zn(2+) binding site. Glutamate 131 is an active-site residue. Residue histidine 134 coordinates Zn(2+). Transmembrane regions (helical) follow at residues 145-165 and 173-193; these read IVAT…FLGG and VMGV…AMIV. Glutamate 202 is a binding site for Zn(2+). The tract at residues 286-325 is disordered; sequence SAAMTARAAAPSQNSGPWGQRSDNAGGNSNGGSRYRGPWS. Positions 306–325 are enriched in low complexity; it reads RSDNAGGNSNGGSRYRGPWS.

This sequence belongs to the peptidase M48B family. Requires Zn(2+) as cofactor.

The protein resides in the cell inner membrane. This is Protease HtpX homolog from Brucella melitensis biotype 2 (strain ATCC 23457).